A 421-amino-acid chain; its full sequence is Phosphatidylinositol 5-phosphate 4-kinase type-2 gamma (421 aa).

A2 bears the N-acetylalanine mark. A Phosphoserine modification is found at S26. In terms of domain architecture, PIPK spans 43 to 420 (AADPLVGVFL…RFLDFITNIF (378 aa)). The tract at residues 69-75 (VMLLPDD) is required for interaction with PIP5K1A. S349 carries the post-translational modification Phosphoserine.

As to quaternary structure, interacts with PIP5K1A; the interaction inhibits PIP5K1A kinase activity. In terms of processing, phosphorylated, phosphorylation is induced by EGF.

It is found in the endoplasmic reticulum. It localises to the cytoplasm. The catalysed reaction is a 1,2-diacyl-sn-glycero-3-phospho-(1D-myo-inositol-5-phosphate) + ATP = a 1,2-diacyl-sn-glycero-3-phospho-(1D-myo-inositol-4,5-bisphosphate) + ADP + H(+). It catalyses the reaction 1,2-dihexadecanoyl-sn-glycero-3-phospho-(1D-myo-inositol-5-phosphate) + ATP = 1,2-dihexadecanoyl-sn-glycero-3-phospho-(1D-myo-inositol-4,5-bisphosphate) + ADP + H(+). The enzyme catalyses 1,2-dihexadecanoyl-sn-glycero-3-phospho-(1D-myo-inositol-5-phosphate) + GTP = 1,2-dihexadecanoyl-sn-glycero-3-phospho-(1D-myo-inositol-4,5-bisphosphate) + GDP + H(+). Functionally, phosphatidylinositol 5-phosphate 4-kinase with low enzymatic activity. May be a GTP sensor, has higher GTP-dependent kinase activity than ATP-dependent kinase activity. PIP4Ks negatively regulate insulin signaling through a catalytic-independent mechanism. They interact with PIP5Ks and suppress PIP5K-mediated PtdIns(4,5)P2 synthesis and insulin-dependent conversion to PtdIns(3,4,5)P3. This is Phosphatidylinositol 5-phosphate 4-kinase type-2 gamma (PIP4K2C) from Pongo abelii (Sumatran orangutan).